Consider the following 475-residue polypeptide: Cytosolic non-specific dipeptidase (475 aa).

N6-acetyllysine is present on lysine 9. At serine 58 the chain carries Phosphoserine. Histidine 99 provides a ligand contact to Mn(2+). Residue aspartate 101 is part of the active site. Mn(2+) is bound at residue aspartate 132. Glutamate 166 serves as the catalytic Proton acceptor. Residues 166-167 (EE), aspartate 195, histidine 228, threonine 330, arginine 343, serine 417, and histidine 445 contribute to the substrate site. Residues glutamate 167 and aspartate 195 each contribute to the Mn(2+) site. Position 445 (histidine 445) interacts with Mn(2+).

This sequence belongs to the peptidase M20A family. Homodimer. Mn(2+) is required as a cofactor.

Its subcellular location is the cytoplasm. It catalyses the reaction Hydrolysis of dipeptides, preferentially hydrophobic dipeptides including prolyl amino acids.. The enzyme catalyses L-threonyl-L-threonine + H2O = 2 L-threonine. The catalysed reaction is L-threonyl-L-serine + H2O = L-threonine + L-serine. It carries out the reaction L-seryl-L-threonine + H2O = L-threonine + L-serine. It catalyses the reaction L-cysteinylglycine + H2O = L-cysteine + glycine. The enzyme catalyses L-alanyl-L-cysteine + H2O = L-cysteine + L-alanine. The catalysed reaction is (S)-lactate + L-phenylalanine = N-[(S)-lactoyl]-L-phenylalanine + H2O. Its function is as follows. Catalyzes the peptide bond hydrolysis in dipeptides, displaying a non-redundant activity toward threonyl dipeptides. Mediates threonyl dipeptide catabolism in a tissue-specific way. Has high dipeptidase activity toward cysteinylglycine, an intermediate metabolite in glutathione metabolism. Metabolizes N-lactoyl-amino acids, both through hydrolysis to form lactic acid and amino acids, as well as through their formation by reverse proteolysis. Plays a role in the regulation of cell cycle arrest and apoptosis. This chain is Cytosolic non-specific dipeptidase (CNDP2), found in Bos taurus (Bovine).